The chain runs to 537 residues: Phosphoenolpyruvate carboxykinase (ATP) (537 aa).

Substrate contacts are provided by Arg-61, Tyr-195, and Lys-201. ATP contacts are provided by residues Lys-201, His-220, and Gly-236–Thr-244. Mn(2+) is bound by residues Lys-201 and His-220. Asp-257 is a Mn(2+) binding site. Glu-285 contributes to the ATP binding site. Over residues Pro-311–Asn-321 the composition is skewed to basic and acidic residues. A disordered region spans residues Pro-311–Gln-342. Arg-323 contributes to the substrate binding site. ATP contacts are provided by Arg-323 and Thr-448.

The protein belongs to the phosphoenolpyruvate carboxykinase (ATP) family. It depends on Mn(2+) as a cofactor.

Its subcellular location is the cytoplasm. The enzyme catalyses oxaloacetate + ATP = phosphoenolpyruvate + ADP + CO2. It participates in carbohydrate biosynthesis; gluconeogenesis. Functionally, involved in the gluconeogenesis. Catalyzes the conversion of oxaloacetate (OAA) to phosphoenolpyruvate (PEP) through direct phosphoryl transfer between the nucleoside triphosphate and OAA. The protein is Phosphoenolpyruvate carboxykinase (ATP) of Rhodopseudomonas palustris (strain BisB5).